The chain runs to 500 residues: ADP,ATP carrier protein 5 (500 aa).

11 consecutive transmembrane segments (helical) span residues 26–46 (LGKF…QNIL), 62–82 (IAGF…VIIY), 94–114 (IFYY…FVIY), 149–169 (YIVY…LLFW), 184–204 (FYTL…FLMM), 224–244 (ITLV…CCLL), 287–307 (LWLL…VEAV), 328–348 (LYIL…NNVM), 357–377 (AVIS…LIVF), 381–401 (ILSL…VSIG), and 469–489 (SISP…IYAV).

It belongs to the ADP/ATP translocase tlc family.

The protein localises to the cell membrane. Functionally, provides the rickettsial cell with host ATP in exchange for rickettsial ADP. This is an obligate exchange system. This energy acquiring activity is an important component of rickettsial parasitism. The protein is ADP,ATP carrier protein 5 (tlcE) of Rickettsia prowazekii (strain Madrid E).